We begin with the raw amino-acid sequence, 495 residues long: Cytochrome P450 2E1 (495 aa).

298-303 contributes to the substrate binding site; sequence FAGTET. Cys437 contacts heme.

The protein belongs to the cytochrome P450 family. In terms of assembly, interacts with chaperones HSP70 and HSP90; this interaction is required for initial targeting to mitochondria. Heme is required as a cofactor.

The protein resides in the endoplasmic reticulum membrane. The protein localises to the microsome membrane. It is found in the mitochondrion inner membrane. It catalyses the reaction an organic molecule + reduced [NADPH--hemoprotein reductase] + O2 = an alcohol + oxidized [NADPH--hemoprotein reductase] + H2O + H(+). It carries out the reaction (5Z,8Z,11Z)-eicosatrienoate + reduced [NADPH--hemoprotein reductase] + O2 = 19-hydroxy-(5Z,8Z,11Z)-eicosatrienoate + oxidized [NADPH--hemoprotein reductase] + H2O + H(+). The enzyme catalyses (5Z,8Z,11Z,14Z,17Z)-eicosapentaenoate + reduced [NADPH--hemoprotein reductase] + O2 = 19-hydroxy-(5Z,8Z,11Z,14Z,17Z)-eicosapentaenoate + oxidized [NADPH--hemoprotein reductase] + H2O + H(+). The catalysed reaction is (4Z,7Z,10Z,13Z,16Z,19Z)-docosahexaenoate + reduced [NADPH--hemoprotein reductase] + O2 = 21-hydroxy-(4Z,7Z,10Z,13Z,16Z,19Z)-docosahexaenoate + oxidized [NADPH--hemoprotein reductase] + H2O + H(+). It catalyses the reaction dodecanoate + reduced [NADPH--hemoprotein reductase] + O2 = 11-hydroxydodecanoate + oxidized [NADPH--hemoprotein reductase] + H2O + H(+). It carries out the reaction tetradecanoate + reduced [NADPH--hemoprotein reductase] + O2 = 13-hydroxytetradecanoate + oxidized [NADPH--hemoprotein reductase] + H2O + H(+). The enzyme catalyses 4-nitrophenol + NADPH + O2 + H(+) = 4-nitrocatechol + NADP(+) + H2O. It functions in the pathway lipid metabolism; fatty acid metabolism. With respect to regulation, the omega-1 hydroxylase activity is stimulated by cytochrome b5. In terms of biological role, a cytochrome P450 monooxygenase involved in the metabolism of fatty acids. Mechanistically, uses molecular oxygen inserting one oxygen atom into a substrate, and reducing the second into a water molecule, with two electrons provided by NADPH via cytochrome P450 reductase (NADPH--hemoprotein reductase). Catalyzes the hydroxylation of carbon-hydrogen bonds. Hydroxylates fatty acids specifically at the omega-1 position displaying the highest catalytic activity for saturated fatty acids. May be involved in the oxidative metabolism of xenobiotics. The chain is Cytochrome P450 2E1 (CYP2E1) from Bos taurus (Bovine).